Here is a 339-residue protein sequence, read N- to C-terminus: GTPase Obg (339 aa).

The Obg domain maps to 1–159 (MKFVDEAFVR…RELKLELKLL (159 aa)). The tract at residues 127–147 (NTHFKSSTNRAPRRTTSGEEG) is disordered. Positions 160–333 (ADVGLLGLPN…LCYDLMSFLE (174 aa)) constitute an OBG-type G domain. GTP is bound by residues 166–173 (GLPNAGKS), 191–195 (FTTLY), 213–216 (DIPG), 283–286 (NKID), and 314–316 (SAI). Residues Ser-173 and Thr-193 each contribute to the Mg(2+) site.

This sequence belongs to the TRAFAC class OBG-HflX-like GTPase superfamily. OBG GTPase family. In terms of assembly, monomer. The cofactor is Mg(2+).

Its subcellular location is the cytoplasm. An essential GTPase which binds GTP, GDP and possibly (p)ppGpp with moderate affinity, with high nucleotide exchange rates and a fairly low GTP hydrolysis rate. Plays a role in control of the cell cycle, stress response, ribosome biogenesis and in those bacteria that undergo differentiation, in morphogenesis control. This chain is GTPase Obg, found in Coxiella burnetii (strain CbuK_Q154) (Coxiella burnetii (strain Q154)).